Consider the following 54-residue polypeptide: Rubredoxin (54 aa).

Residues 1-54 (MKKYQCIVCGWIYDEAEGWPQDGIAPGTKWEDIPDDWTCPDCGVSKVDFEMIEV) enclose the Rubredoxin-like domain. Fe cation contacts are provided by cysteine 6, cysteine 9, cysteine 39, and cysteine 42.

Belongs to the rubredoxin family. Fe(3+) is required as a cofactor.

The protein localises to the cytoplasm. It participates in hydrocarbon metabolism; alkane degradation. Functionally, involved in the hydrocarbon hydroxylating system, which transfers electrons from NADH to rubredoxin reductase and then through rubredoxin to alkane 1 monooxygenase. This Acinetobacter baylyi (strain ATCC 33305 / BD413 / ADP1) protein is Rubredoxin (rubA).